A 115-amino-acid chain; its full sequence is Large ribosomal subunit protein bL19 (115 aa).

The protein belongs to the bacterial ribosomal protein bL19 family.

Functionally, this protein is located at the 30S-50S ribosomal subunit interface and may play a role in the structure and function of the aminoacyl-tRNA binding site. This Lachnospira eligens (strain ATCC 27750 / DSM 3376 / VPI C15-48 / C15-B4) (Eubacterium eligens) protein is Large ribosomal subunit protein bL19.